A 450-amino-acid polypeptide reads, in one-letter code: NADP-specific glutamate dehydrogenase (450 aa).

The active site involves Lys-114.

The protein belongs to the Glu/Leu/Phe/Val dehydrogenases family. In terms of assembly, homohexamer.

The enzyme catalyses L-glutamate + NADP(+) + H2O = 2-oxoglutarate + NH4(+) + NADPH + H(+). In Botryotinia fuckeliana (Noble rot fungus), this protein is NADP-specific glutamate dehydrogenase (gdhA).